We begin with the raw amino-acid sequence, 134 residues long: Profilin-3 (134 aa).

A disulfide bridge links Cys13 with Cys118. The Involved in PIP2 interaction signature appears at 84–100 (AVIRGKKGSGGITIKKT). Thr114 carries the post-translational modification Phosphothreonine.

Belongs to the profilin family. Occurs in many kinds of cells as a complex with monomeric actin in a 1:1 ratio. In terms of processing, phosphorylated by MAP kinases.

The protein resides in the cytoplasm. Its subcellular location is the cytoskeleton. Its function is as follows. Binds to actin and affects the structure of the cytoskeleton. At high concentrations, profilin prevents the polymerization of actin, whereas it enhances it at low concentrations. The sequence is that of Profilin-3 from Olea europaea (Common olive).